Consider the following 212-residue polypeptide: Cytidylate kinase (212 aa).

Residue 11–19 participates in ATP binding; that stretch reads GPAASGKGT. A disordered region spans residues 50-69; sequence GGDPADPAASEEQARSLSRL.

The protein belongs to the cytidylate kinase family. Type 1 subfamily.

It is found in the cytoplasm. It carries out the reaction CMP + ATP = CDP + ADP. The catalysed reaction is dCMP + ATP = dCDP + ADP. This is Cytidylate kinase from Acidiphilium cryptum (strain JF-5).